Consider the following 256-residue polypeptide: Cilia- and flagella-associated protein 410 (256 aa).

LRR repeat units follow at residues 19–40, 41–62, and 63–84; these read SVRK…QEMP, SLEV…SRCQ, and RLSE…FYLK. Residues 97–137 form the LRRCT domain; it reads NPCCGTSPHRYRMTVLRTLPRLQKLDNQAVTEEELSRALSE. Disordered stretches follow at residues 129–156 and 168–212; these read EELS…GGPK and AETG…SSHR. 2 positions are modified to phosphoserine: S136 and S177.

In terms of assembly, found in a complex with CFAP410, NEK1 and SPATA7. Interacts with NEK1. In terms of tissue distribution, widely expressed. Expressed in the retina.

The protein resides in the mitochondrion. The protein localises to the cytoplasm. It localises to the cytoskeleton. Its subcellular location is the cilium basal body. It is found in the cell projection. The protein resides in the cilium. The protein localises to the photoreceptor outer segment. Its function is as follows. Plays a role in cilia formation and/or maintenance. Plays a role in the regulation of cell morphology and cytoskeletal organization. Involved in DNA damage repair. This is Cilia- and flagella-associated protein 410 from Homo sapiens (Human).